A 590-amino-acid chain; its full sequence is Nuclear receptor subfamily 2 group C member 1 (590 aa).

Residues 1-166 (MATIEEIAHQ…RLQRCIAFGM (166 aa)) are required for interaction with KAT2B. A DNA-binding region (nuclear receptor) is located at residues 98–173 (FDLCVVCGDK…FGMKQDSVQC (76 aa)). 2 consecutive NR C4-type zinc fingers follow at residues 101–121 (CVVCGDKASGRHYGAITCEGC) and 137–156 (CRGSKDCVINKHHRNRCQYC). Phosphoserine occurs at positions 185 and 203. Threonine 208 carries the phosphothreonine modification. Position 210 is a phosphothreonine; by MAPK1 (threonine 210). Lysine 238 is covalently cross-linked (Glycyl lysine isopeptide (Lys-Gly) (interchain with G-Cter in SUMO); alternate). A Glycyl lysine isopeptide (Lys-Gly) (interchain with G-Cter in SUMO2); alternate cross-link involves residue lysine 238. An NR LBD domain is found at 333–577 (EGMEGSPHLI…SVIPHILKME (245 aa)). A phosphoserine; by PKC mark is found at serine 461 and serine 568. The required for interaction with NRIP1 stretch occupies residues 571–590 (PHILKMEPADYNSQIIGHSL). Lysine 575 participates in a covalent cross-link: Glycyl lysine isopeptide (Lys-Gly) (interchain with G-Cter in SUMO2).

Belongs to the nuclear hormone receptor family. NR2 subfamily. As to quaternary structure, homodimer. Heterodimer; with NR2C2 which is required for chromatin remodeling and for binding to promoter regions such as globin DR1 repeats. Interacts with ESR1; the interaction prevents homodimerization of ESR1 and suppresses its transcriptional activity and cell growth. Interacts with NRIP1 (via its LXXLL motifs); the interaction provides corepressor activity. Interacts with HDAC3 (via the DNA-binding domain); the interaction recruits phosphorylated NR2C1 to PML bodies for sumoylation. Interacts with HDAC4 (via the DNA-binding domain). Interacts with PIAS1; the interaction is required for sumoylation of NR2C1. Interacts with UBE2I; the interaction is required for sumoylation of NR2C1. Interacts with KAT2B; the interaction acts as a corepressor of gene expression. Post-translationally, sumoylation requires both PIAS1 and UBE2I. Sumoylation appears to dissociate NR2C1 from the PML nuclear bodies. Enhances the interaction with NRIP1 but inhibits interaction with KAT2B. In proliferating cells, stimulation by all-trans retinoic acid, activation of MAPK1-mediated phosphorylation and recruitment to PML bodies with subsequent sumoylation, suppresses OCT4 expression. In terms of processing, phosphorylated on several serine and threonine residues. Phosphorylation on Thr-210, stimulated by all-trans retinoic acid (atRA) mediates PML location and sumoylation in proliferating cells which then modulates its association with effector molecules, KAT2B and NRIP1. Phosphorylation on Ser-568 by PKC is important for protein stability and function as activator of RARB. As to expression, isoform 1 is highly expressed in the adlumenal compartment of the seminiferous tubule of adult testes (at protein level) and in the eyes of newborn animals. Weakly expressed in other adult organs including the seminal vesicle, prostate, ovary, adrenal gland, heart, thymus, placenta and brain. Expressed during embryonic stages in developing eyes, brain and cartilage primordia (at protein level). Also expressed in the developing spinal motor neurons and in the sympathetic-, parasympathetic- and sensory ganglia of the embryonic PNS. Expressed in the developing neural epithelia of the inner ear, nasal cavity, tongue and retina. At day 16.5, expressed in various tissues including kidney and intestine. In contrast, isoform 2 is widely expressed at a low level throughout the adult testis.

Its subcellular location is the nucleus. It is found in the PML body. Orphan nuclear receptor. Binds the IR7 element in the promoter of its own gene in an autoregulatory negative feedback mechanism. Primarily repressor of a broad range of genes including ESR1 and RARB. Together with NR2C2, forms the core of the DRED (direct repeat erythroid-definitive) complex that represses embryonic and fetal globin transcription. Binds to hormone response elements (HREs) consisting of two 5'-AGGTCA-3' half site direct repeat consensus sequences. Also activator of OCT4 gene expression. Plays a fundamental role in early embryogenesis and regulates embryonic stem cell proliferation and differentiation. Mediator of retinoic acid-regulated preadipocyte proliferation. This is Nuclear receptor subfamily 2 group C member 1 from Mus musculus (Mouse).